The following is an 822-amino-acid chain: Sushi domain-containing protein 2 (822 aa).

The N-terminal stretch at 1–27 (MKPALLPWALLLLATALGPGPGPTADA) is a signal peptide. Residues 28 to 66 (QESCSMRCGALDGPCSCHPTCSGLGTCCLDFRDFCLEIL) form the SMB domain. Residues 28 to 785 (QESCSMRCGA…PKCQPGRSYA (758 aa)) lie on the Extracellular side of the membrane. Intrachain disulfides connect C31-C35, C31-C44, C35-C62, C42-C44, C42-C55, C48-C54, and C55-C62. N-linked (GlcNAc...) asparagine glycosylation is found at N162 and N177. The region spanning 285 to 433 (PVAWARTQCQ…PDCPRYMQRR (149 aa)) is the AMOP domain. The 195-residue stretch at 445–639 (RLASAFGDPH…NWTVHNASSL (195 aa)) folds into the VWFD domain. N-linked (GlcNAc...) asparagine glycosylation occurs at N522. In terms of domain architecture, Sushi spans 723–780 (VSCGWLAPPPNGQKEGNRYLAGSTIYFHCDNGYSLAGAETSTCQADGTWSSPTPKCQP). Intrachain disulfides connect C725-C765 and C751-C778. A helical transmembrane segment spans residues 786–806 (VLLGIIFGGLAVVAAVALVYV). Over 807–822 (LLRRRKGNTHVWGAQP) the chain is Cytoplasmic.

Interacts with LGALS1; leads to an increased amount of LGALS1 on the cell surface. Interacts with GPR15LG; the interaction is direct. Highly expressed in breast cancer, but shows a restricted expression pattern in normal tissues such as adipose, adrenal gland, kidney, lung, mammary gland, placenta, thyroid, trachea, and uterus. Also expressed in colon; down-regulated in colon cancer tissues.

It localises to the cell membrane. Functionally, may be a cytokine receptor for GPR15LG. May be a tumor suppressor; together with GPR15LG has a growth inhibitory effect on colon cancer cells which includes G1 cell cycle arrest. May play a role in breast tumorigenesis. The protein is Sushi domain-containing protein 2 (SUSD2) of Homo sapiens (Human).